Consider the following 87-residue polypeptide: Signal recognition particle 19 kDa protein (87 aa).

Belongs to the SRP19 family. Part of the signal recognition particle protein translocation system, which is composed of SRP and FtsY. Archaeal SRP consists of a 7S RNA molecule of 300 nucleotides and two protein subunits: SRP54 and SRP19.

It is found in the cytoplasm. Functionally, involved in targeting and insertion of nascent membrane proteins into the cytoplasmic membrane. Binds directly to 7S RNA and mediates binding of the 54 kDa subunit of the SRP. The protein is Signal recognition particle 19 kDa protein of Methanocaldococcus jannaschii (strain ATCC 43067 / DSM 2661 / JAL-1 / JCM 10045 / NBRC 100440) (Methanococcus jannaschii).